Here is a 266-residue protein sequence, read N- to C-terminus: Movement protein (266 aa).

A compositionally biased stretch (basic residues) spans 212–227 (KTKKGKKRKKEKKKRV). A disordered region spans residues 212 to 266 (KTKKGKKRKKEKKKRVVGNSVNNKKINNSGKKGLKVEEIEDNVSDDESIASSSTF). Low complexity predominate over residues 228–242 (VGNSVNNKKINNSGK). A compositionally biased stretch (acidic residues) spans 249–259 (EIEDNVSDDES).

The protein belongs to the tobamovirus movement protein family.

The protein resides in the host cytoplasm. It is found in the host cytoskeleton. Its subcellular location is the host cell junction. The protein localises to the host plasmodesma. Functionally, transports viral genome to neighboring plant cells directly through plasmosdesmata, without any budding. The movement protein allows efficient cell to cell propagation, by bypassing the host cell wall barrier. Forms a ribonucleoprotein complex with viral RNA. Binds microtubules and modulates microtubule stability. Can bind double-stranded DNA. This chain is Movement protein (MP), found in Capsicum annuum (Capsicum pepper).